Reading from the N-terminus, the 211-residue chain is Ras-related protein Rab-38 (211 aa).

10 residues coordinate GTP: Gly19, Val20, Gly21, Lys22, Thr23, Ser24, Ser35, Ser36, Tyr38, and Thr41. Thr23 is a Mg(2+) binding site. The Switch 1 signature appears at 32–46 (QNFSSHYRATIGVDF). Positions 41 and 65 each coordinate Mg(2+). GTP is bound by residues Gly68, Lys128, Asp130, Ala160, and Lys161. The Switch 2 motif lies at 68 to 81 (GQERFGNMTRVYYR). Cys205 carries the S-palmitoyl cysteine lipid modification. Cys208 is lipidated: S-geranylgeranyl cysteine.

This sequence belongs to the small GTPase superfamily. Rab family. Interacts with ANKRD27. Mg(2+) serves as cofactor.

It is found in the cell membrane. The protein resides in the cytoplasmic vesicle. Its subcellular location is the phagosome. It localises to the phagosome membrane. The protein localises to the melanosome. It is found in the melanosome membrane. The catalysed reaction is GTP + H2O = GDP + phosphate + H(+). Regulated by guanine nucleotide exchange factors (GEFs) including the BLOC-3 complex composed of HPS1 and HPS4 which promote the exchange of bound GDP for free GTP. Regulated by GTPase activating proteins (GAPs) including SGSM2 which increase the GTP hydrolysis activity. Inhibited by GDP dissociation inhibitors (GDIs). The small GTPases Rab are key regulators of intracellular membrane trafficking, from the formation of transport vesicles to their fusion with membranes. Rabs cycle between an inactive GDP-bound form and an active GTP-bound form that is able to recruit to membranes different sets of downstream effectors directly responsible for vesicle formation, movement, tethering and fusion. RAB38 plays a role in the maturation of phagosomes that engulf pathogens, such as S.aureus and Mycobacterium. May be involved in melanosomal transport and docking. Involved in the proper sorting of TYRP1. Involved in peripheral melanosomal distribution of TYRP1 in melanocytes; the function, which probably is implicating vesicle-trafficking, includes cooperation with ANKRD27 and VAMP7. Plays an important role in the control of melanin production and melanosome biogenesis. In concert with RAB32, regulates the proper trafficking of melanogenic enzymes TYR, TYRP1 and DCT/TYRP2 to melanosomes in melanocytes. This chain is Ras-related protein Rab-38, found in Mus musculus (Mouse).